The sequence spans 517 residues: Crotonobetaine/carnitine--CoA ligase (517 aa).

This sequence belongs to the ATP-dependent AMP-binding enzyme family.

The catalysed reaction is 4-(trimethylamino)butanoate + ATP + CoA = 4-(trimethylamino)butanoyl-CoA + AMP + diphosphate. The enzyme catalyses crotonobetaine + ATP + CoA = crotonobetainyl-CoA + AMP + diphosphate. It carries out the reaction (R)-carnitine + ATP + CoA = (R)-carnitinyl-CoA + AMP + diphosphate. It participates in amine and polyamine metabolism; carnitine metabolism. Catalyzes the transfer of CoA to carnitine, generating the initial carnitinyl-CoA needed for the CaiB reaction cycle. Also has activity toward crotonobetaine and gamma-butyrobetaine. This is Crotonobetaine/carnitine--CoA ligase from Salmonella enteritidis PT4 (strain P125109).